Consider the following 137-residue polypeptide: Protein CTLA-2-alpha (137 aa).

The first 27 residues, 1–27, serve as a signal peptide directing secretion; it reads MMVSICEQKLQHFSAVFLLILCLGMMS. 2 tandem repeats follow at residues 39–41 and 42–44. The segment at 39–44 is 2 X 3 AA tandem repeats of E-W-K; it reads EWKEWK. Positions 114-137 are disordered; sequence APDLPEYEDLGKNSYLTPGRAQPE.

The protein to the propeptide regions of cysteine proteases.

The protein resides in the secreted. In terms of biological role, not known, expressed in activated T-cell. The polypeptide is Protein CTLA-2-alpha (Ctla2a) (Mus musculus (Mouse)).